The following is a 194-amino-acid chain: Imidazoleglycerol-phosphate dehydratase (194 aa).

The protein belongs to the imidazoleglycerol-phosphate dehydratase family.

Its subcellular location is the cytoplasm. It catalyses the reaction D-erythro-1-(imidazol-4-yl)glycerol 3-phosphate = 3-(imidazol-4-yl)-2-oxopropyl phosphate + H2O. Its pathway is amino-acid biosynthesis; L-histidine biosynthesis; L-histidine from 5-phospho-alpha-D-ribose 1-diphosphate: step 6/9. This is Imidazoleglycerol-phosphate dehydratase from Caldicellulosiruptor saccharolyticus (strain ATCC 43494 / DSM 8903 / Tp8T 6331).